Reading from the N-terminus, the 1079-residue chain is Intraflagellar transport protein 80 (1079 aa).

Positions 495-514 (GDMIRPSTVQNQPSTQGLPN) are disordered. Residues 501–514 (STVQNQPSTQGLPN) are compositionally biased toward polar residues.

It is found in the cell projection. Its subcellular location is the cilium. It localises to the flagellum. The protein localises to the cytoplasm. The protein resides in the cytoskeleton. It is found in the flagellum axoneme. Its subcellular location is the flagellum basal body. Component of the intraflagellar transport complex B (IFT-B) involved in flagellar assembly. The protein is Intraflagellar transport protein 80 of Giardia intestinalis (strain ATCC 50803 / WB clone C6) (Giardia lamblia).